The chain runs to 367 residues: Protein TlpB (367 aa).

The next 5 membrane-spanning stretches (helical) occupy residues 15–35, 53–73, 83–103, 124–144, and 153–173; these read ILIS…SPYF, IIAP…GILI, IIPI…YVTF, IQAI…FFLL, and FYVV…LAPI.

It is found in the membrane. The chain is Protein TlpB (tlpB) from Flavobacterium psychrophilum.